The chain runs to 287 residues: Octanoyl-[GcvH]:protein N-octanoyltransferase (287 aa).

The 209-residue stretch at 45–253 (GESPATARSW…ELKELSGRLY (209 aa)) folds into the BPL/LPL catalytic domain. Residue Cys150 is the Acyl-thioester intermediate of the active site.

The protein belongs to the octanoyltransferase LipL family.

It carries out the reaction N(6)-octanoyl-L-lysyl-[glycine-cleavage complex H protein] + L-lysyl-[lipoyl-carrier protein] = N(6)-octanoyl-L-lysyl-[lipoyl-carrier protein] + L-lysyl-[glycine-cleavage complex H protein]. Its pathway is protein modification; protein lipoylation via endogenous pathway; protein N(6)-(lipoyl)lysine from octanoyl-[acyl-carrier-protein]. In terms of biological role, catalyzes the amidotransfer (transamidation) of the octanoyl moiety from octanoyl-GcvH to the lipoyl domain of the E2 subunit of lipoate-dependent enzymes. In Bacillus velezensis (strain DSM 23117 / BGSC 10A6 / LMG 26770 / FZB42) (Bacillus amyloliquefaciens subsp. plantarum), this protein is Octanoyl-[GcvH]:protein N-octanoyltransferase.